The following is a 283-amino-acid chain: Orotidine 5'-phosphate decarboxylase (283 aa).

Lysine 97 functions as the Proton donor in the catalytic mechanism.

The protein belongs to the OMP decarboxylase family. Type 2 subfamily.

It catalyses the reaction orotidine 5'-phosphate + H(+) = UMP + CO2. It participates in pyrimidine metabolism; UMP biosynthesis via de novo pathway; UMP from orotate: step 2/2. The sequence is that of Orotidine 5'-phosphate decarboxylase from Clostridium botulinum (strain ATCC 19397 / Type A).